The following is a 145-amino-acid chain: Arginine repressor (145 aa).

Belongs to the ArgR family.

It localises to the cytoplasm. It functions in the pathway amino-acid biosynthesis; L-arginine biosynthesis [regulation]. Its function is as follows. Regulates arginine biosynthesis genes. The polypeptide is Arginine repressor (Streptococcus equi subsp. zooepidemicus (strain H70)).